The sequence spans 823 residues: ATP-dependent DNA helicase At3g02060, chloroplastic (823 aa).

The transit peptide at 1 to 53 (MMSLLPNPDPITVPLVLKLCSFPPPRRLFSLRLRRFTRKSSSLLPLVAVSSLS) directs the protein to the chloroplast. The Helicase ATP-binding domain maps to 285–447 (LTERETPMDR…LTGFRDASLI (163 aa)). 298 to 305 (GDVGFGKT) lines the ATP pocket. The short motif at 400 to 403 (DEEQ) is the DEEQ box element. The 158-residue stretch at 465-622 (RKEKVIEAIK…GFQLAEKDMG (158 aa)) folds into the Helicase C-terminal domain.

Belongs to the helicase family.

Its subcellular location is the plastid. The protein localises to the chloroplast. The catalysed reaction is ATP + H2O = ADP + phosphate + H(+). This Arabidopsis thaliana (Mouse-ear cress) protein is ATP-dependent DNA helicase At3g02060, chloroplastic.